Here is a 227-residue protein sequence, read N- to C-terminus: PKHD-type hydroxylase BamMC406_4714 (227 aa).

Residues 78–178 (KVFPPLFNRY…RVASFFWIQS (101 aa)) form the Fe2OG dioxygenase domain. Fe cation-binding residues include histidine 96, aspartate 98, and histidine 159. Arginine 169 lines the 2-oxoglutarate pocket.

It depends on Fe(2+) as a cofactor. L-ascorbate is required as a cofactor.

The polypeptide is PKHD-type hydroxylase BamMC406_4714 (Burkholderia ambifaria (strain MC40-6)).